The sequence spans 131 residues: Heterochromatin silencing protein rss1 (131 aa).

In terms of assembly, monomer.

It is found in the cytoplasm. The protein localises to the nucleus. In terms of biological role, required for heterochromatin silencing within pericentromeric repeats and at telomers. Facilitates the recruitment of Clr6 histone deacetylase (HDAC) by interacting with histones. Also interacts with Rad25, which mediates heterochromatin silencing in DNA repeats by recruiting the RITS complex. Together with Rad25, forms a regulatory hub that defines heterochromatin silencing within tandem repeats via linking RNAi and HDAC. This Schizosaccharomyces pombe (strain 972 / ATCC 24843) (Fission yeast) protein is Heterochromatin silencing protein rss1 (rss1).